Reading from the N-terminus, the 592-residue chain is Membrane protein insertase YidC (592 aa).

Residues N7 to V27 traverse the membrane as a helical segment. The disordered stretch occupies residues A38 to Q74. Over residues A41–G69 the composition is skewed to low complexity. The next 4 membrane-spanning stretches (helical) occupy residues L367–F387, W441–I461, L486–I506, and F530–I550.

Belongs to the OXA1/ALB3/YidC family. Type 1 subfamily. In terms of assembly, interacts with the Sec translocase complex via SecD. Specifically interacts with transmembrane segments of nascent integral membrane proteins during membrane integration.

It is found in the cell inner membrane. Required for the insertion and/or proper folding and/or complex formation of integral membrane proteins into the membrane. Involved in integration of membrane proteins that insert both dependently and independently of the Sec translocase complex, as well as at least some lipoproteins. Aids folding of multispanning membrane proteins. The sequence is that of Membrane protein insertase YidC from Sinorhizobium fredii (strain NBRC 101917 / NGR234).